The chain runs to 226 residues: Tyramine N-feruloyltransferase 10/30 (226 aa).

An important in binding site and for catalytic activity region spans residues 29-45; that stretch reads HIYKLFYQIHEYHNYTH. The N-acetyltransferase domain occupies 72–222; the sequence is VLLLEVSPTP…VGDALQKYAD (151 aa).

The protein belongs to the acetyltransferase family. Homodimer.

It is found in the cytoplasm. The catalysed reaction is tyramine + (E)-feruloyl-CoA = N-[(E)-feruloyl]tyramine + CoA + H(+). Inhibited by (2-hydroxyphenyl)amino sulfinyl acetic acid 1,1-dimethylethyl ester, by DEPC and by N-ethylmaleimide. Functionally, synthesizes amides which are involved in stress response in the cell wall. Catalyzes the synthesis of hydroxycinnamic acid amides from hydroxycinnamoyl-CoA thioesters and various hydroxyphenylethylamines such as 4-coumaroyl-CoA and sinapoyl-CoA. In Nicotiana tabacum (Common tobacco), this protein is Tyramine N-feruloyltransferase 10/30 (THT10).